The primary structure comprises 382 residues: Alcohol dehydrogenase 4 (382 aa).

This sequence belongs to the iron-containing alcohol dehydrogenase family. In terms of assembly, homodimer. Zn(2+) serves as cofactor. Requires Fe(2+) as cofactor.

It is found in the mitochondrion. The catalysed reaction is a primary alcohol + NAD(+) = an aldehyde + NADH + H(+). It carries out the reaction a secondary alcohol + NAD(+) = a ketone + NADH + H(+). Inhibited by EDTA. Its function is as follows. Reduces acetaldehyde to ethanol during glucose fermentation. Specific for ethanol. Shows drastically reduced activity towards primary alcohols from 4 carbon atoms upward. Isomers of aliphatic alcohol, as well as secondary alcohols and glycerol are not used at all. The polypeptide is Alcohol dehydrogenase 4 (ADH4) (Saccharomyces cerevisiae (strain YJM789) (Baker's yeast)).